The primary structure comprises 79 residues: D-alanyl carrier protein (79 aa).

In terms of domain architecture, Carrier spans 1–76; the sequence is MEEQVLSLLE…RVMAYVKKRV (76 aa). Serine 34 is subject to O-(pantetheine 4'-phosphoryl)serine.

Belongs to the DltC family. In terms of processing, 4'-phosphopantetheine is transferred from CoA to a specific serine of apo-DCP.

The protein resides in the cytoplasm. It functions in the pathway cell wall biogenesis; lipoteichoic acid biosynthesis. Functionally, carrier protein involved in the D-alanylation of lipoteichoic acid (LTA). The loading of thioester-linked D-alanine onto DltC is catalyzed by D-alanine--D-alanyl carrier protein ligase DltA. The DltC-carried D-alanyl group is further transferred to cell membrane phosphatidylglycerol (PG) by forming an ester bond, probably catalyzed by DltD. D-alanylation of LTA plays an important role in modulating the properties of the cell wall in Gram-positive bacteria, influencing the net charge of the cell wall. In Abiotrophia defectiva (Streptococcus defectivus), this protein is D-alanyl carrier protein.